The following is a 98-amino-acid chain: NADH-ubiquinone oxidoreductase chain 4L (98 aa).

A run of 3 helical transmembrane segments spans residues 1–21, 29–49, and 61–81; these read MPFI…GLLI, SLLC…TMTL, and IILL…LILI.

It belongs to the complex I subunit 4L family. Core subunit of respiratory chain NADH dehydrogenase (Complex I) which is composed of 45 different subunits.

It localises to the mitochondrion inner membrane. The enzyme catalyses a ubiquinone + NADH + 5 H(+)(in) = a ubiquinol + NAD(+) + 4 H(+)(out). Functionally, core subunit of the mitochondrial membrane respiratory chain NADH dehydrogenase (Complex I) which catalyzes electron transfer from NADH through the respiratory chain, using ubiquinone as an electron acceptor. Part of the enzyme membrane arm which is embedded in the lipid bilayer and involved in proton translocation. The chain is NADH-ubiquinone oxidoreductase chain 4L (MT-ND4L) from Cebus albifrons (White-fronted capuchin).